The primary structure comprises 326 residues: Protease HtpX homolog (326 aa).

The next 2 membrane-spanning stretches (helical) occupy residues 10 to 30 (LNMALATLGIVLLGFALALAV) and 41 to 61 (VGLMLSILMFIFFLNIIQWLF). Residue histidine 147 participates in Zn(2+) binding. Glutamate 148 is an active-site residue. Residue histidine 151 participates in Zn(2+) binding. 2 helical membrane-spanning segments follow: residues 159–179 (LLMAVGLIPALIYYLGWWIFW) and 197–217 (LLFLIGIAMMAVSFVFQLLVL). Glutamate 224 contacts Zn(2+).

Belongs to the peptidase M48B family. Zn(2+) serves as cofactor.

The protein resides in the cell membrane. This is Protease HtpX homolog from Saccharolobus islandicus (strain Y.N.15.51 / Yellowstone #2) (Sulfolobus islandicus).